The following is a 569-amino-acid chain: Proline--tRNA ligase (569 aa).

It belongs to the class-II aminoacyl-tRNA synthetase family. ProS type 1 subfamily. In terms of assembly, homodimer.

The protein resides in the cytoplasm. It carries out the reaction tRNA(Pro) + L-proline + ATP = L-prolyl-tRNA(Pro) + AMP + diphosphate. In terms of biological role, catalyzes the attachment of proline to tRNA(Pro) in a two-step reaction: proline is first activated by ATP to form Pro-AMP and then transferred to the acceptor end of tRNA(Pro). As ProRS can inadvertently accommodate and process non-cognate amino acids such as alanine and cysteine, to avoid such errors it has two additional distinct editing activities against alanine. One activity is designated as 'pretransfer' editing and involves the tRNA(Pro)-independent hydrolysis of activated Ala-AMP. The other activity is designated 'posttransfer' editing and involves deacylation of mischarged Ala-tRNA(Pro). The misacylated Cys-tRNA(Pro) is not edited by ProRS. This is Proline--tRNA ligase from Endomicrobium trichonymphae.